Reading from the N-terminus, the 490-residue chain is Cobyric acid synthase (490 aa).

Residues 252–439 (RLKVVVPVLP…LHGLFESTAA (188 aa)) form the GATase cobBQ-type domain. Residue cysteine 333 is the Nucleophile of the active site. The active site involves histidine 431.

The protein belongs to the CobB/CobQ family. CobQ subfamily.

It functions in the pathway cofactor biosynthesis; adenosylcobalamin biosynthesis. Its function is as follows. Catalyzes amidations at positions B, D, E, and G on adenosylcobyrinic A,C-diamide. NH(2) groups are provided by glutamine, and one molecule of ATP is hydrogenolyzed for each amidation. The chain is Cobyric acid synthase from Pseudomonas paraeruginosa (strain DSM 24068 / PA7) (Pseudomonas aeruginosa (strain PA7)).